A 453-amino-acid polypeptide reads, in one-letter code: Tubulin alpha chain (453 aa).

GTP is bound at residue Gln11. Lys40 carries the N6-acetyllysine modification. GTP contacts are provided by Glu71, Gly144, Thr145, Thr179, Asn206, and Asn228. Glu71 is a Mg(2+) binding site. Glu254 is an active-site residue.

This sequence belongs to the tubulin family. As to quaternary structure, dimer of alpha and beta chains. A typical microtubule is a hollow water-filled tube with an outer diameter of 25 nm and an inner diameter of 15 nM. Alpha-beta heterodimers associate head-to-tail to form protofilaments running lengthwise along the microtubule wall with the beta-tubulin subunit facing the microtubule plus end conferring a structural polarity. Microtubules usually have 13 protofilaments but different protofilament numbers can be found in some organisms and specialized cells. Requires Mg(2+) as cofactor. In terms of processing, undergoes a tyrosination/detyrosination cycle, the cyclic removal and re-addition of a C-terminal tyrosine residue by the enzymes tubulin tyrosine carboxypeptidase (TTCP) and tubulin tyrosine ligase (TTL), respectively. Acetylation of alpha chains at Lys-40 stabilizes microtubules and affects affinity and processivity of microtubule motors. This modification has a role in multiple cellular functions, ranging from cell motility, cell cycle progression or cell differentiation to intracellular trafficking and signaling.

Its subcellular location is the cytoplasm. The protein resides in the cytoskeleton. It carries out the reaction GTP + H2O = GDP + phosphate + H(+). In terms of biological role, tubulin is the major constituent of microtubules, a cylinder consisting of laterally associated linear protofilaments composed of alpha- and beta-tubulin heterodimers. Microtubules grow by the addition of GTP-tubulin dimers to the microtubule end, where a stabilizing cap forms. Below the cap, tubulin dimers are in GDP-bound state, owing to GTPase activity of alpha-tubulin. The protein is Tubulin alpha chain (TUBA) of Neospora caninum (Coccidian parasite).